The following is a 290-amino-acid chain: 4-diphosphocytidyl-2-C-methyl-D-erythritol kinase (290 aa).

The active site involves lysine 8. 92-102 lines the ATP pocket; it reads PISAGLAGGST. Aspartate 134 is a catalytic residue.

Belongs to the GHMP kinase family. IspE subfamily.

The enzyme catalyses 4-CDP-2-C-methyl-D-erythritol + ATP = 4-CDP-2-C-methyl-D-erythritol 2-phosphate + ADP + H(+). It participates in isoprenoid biosynthesis; isopentenyl diphosphate biosynthesis via DXP pathway; isopentenyl diphosphate from 1-deoxy-D-xylulose 5-phosphate: step 3/6. Its function is as follows. Catalyzes the phosphorylation of the position 2 hydroxy group of 4-diphosphocytidyl-2C-methyl-D-erythritol. This chain is 4-diphosphocytidyl-2-C-methyl-D-erythritol kinase, found in Caldicellulosiruptor saccharolyticus (strain ATCC 43494 / DSM 8903 / Tp8T 6331).